We begin with the raw amino-acid sequence, 874 residues long: Envelope glycoprotein B (874 aa).

An N-terminal signal peptide occupies residues Met-1–Ala-25. Topologically, residues Gln-26 to Pro-727 are virion surface. 5 disulfides stabilise this stretch: Cys-59/Cys-523, Cys-77/Cys-479, Cys-149/Cys-214, Cys-306/Cys-353, and Cys-546/Cys-583. The segment at Ile-116–Glu-122 is involved in fusion and/or binding to host membrane. An N-linked (GlcNAc...) asparagine; by host glycan is attached at Asn-171. Residues Arg-200–Thr-208 are involved in fusion and/or binding to host membrane. Residues Asn-247, Asn-281, Asn-302, Asn-323, Asn-348, Asn-356, Asn-376, Asn-409, Asn-412, Asn-444, Asn-558, Asn-610, and Asn-624 are each glycosylated (N-linked (GlcNAc...) asparagine; by host). The segment at Asn-412–Ser-450 is disordered. The tract at residues Leu-673–Lys-725 is hydrophobic membrane proximal region. A helical membrane pass occupies residues Phe-728 to Met-748. Residues Thr-749 to Val-874 lie on the Intravirion side of the membrane. The disordered stretch occupies residues Arg-830–Val-874. Residues Tyr-836–Leu-839 carry the Internalization motif motif.

The protein belongs to the herpesviridae glycoprotein B family. As to quaternary structure, homotrimer; disulfide-linked. Binds to heparan sulfate proteoglycans. Interacts with gH/gL heterodimer. In terms of processing, a proteolytic cleavage by host furin generates two subunits that remain linked by disulfide bonds.

The protein resides in the virion membrane. Its subcellular location is the host cell membrane. The protein localises to the host endosome membrane. It is found in the host Golgi apparatus membrane. Envelope glycoprotein that forms spikes at the surface of virion envelope. Essential for the initial attachment to heparan sulfate moieties of the host cell surface proteoglycans. Involved in fusion of viral and cellular membranes leading to virus entry into the host cell. Following initial binding to its host receptors, membrane fusion is mediated by the fusion machinery composed at least of gB and the heterodimer gH/gL. May be involved in the fusion between the virion envelope and the outer nuclear membrane during virion egress. The sequence is that of Envelope glycoprotein B from Equus caballus (Horse).